Here is a 208-residue protein sequence, read N- to C-terminus: Imidazole glycerol phosphate synthase subunit HisH (208 aa).

A Glutamine amidotransferase type-1 domain is found at 1–206 (MIVIVDYDTG…KEMTEDEALS (206 aa)). The active-site Nucleophile is Cys-79. Residues His-181 and Glu-183 contribute to the active site.

As to quaternary structure, heterodimer of HisH and HisF.

It localises to the cytoplasm. The catalysed reaction is 5-[(5-phospho-1-deoxy-D-ribulos-1-ylimino)methylamino]-1-(5-phospho-beta-D-ribosyl)imidazole-4-carboxamide + L-glutamine = D-erythro-1-(imidazol-4-yl)glycerol 3-phosphate + 5-amino-1-(5-phospho-beta-D-ribosyl)imidazole-4-carboxamide + L-glutamate + H(+). It catalyses the reaction L-glutamine + H2O = L-glutamate + NH4(+). The protein operates within amino-acid biosynthesis; L-histidine biosynthesis; L-histidine from 5-phospho-alpha-D-ribose 1-diphosphate: step 5/9. Its function is as follows. IGPS catalyzes the conversion of PRFAR and glutamine to IGP, AICAR and glutamate. The HisH subunit catalyzes the hydrolysis of glutamine to glutamate and ammonia as part of the synthesis of IGP and AICAR. The resulting ammonia molecule is channeled to the active site of HisF. The chain is Imidazole glycerol phosphate synthase subunit HisH from Lacticaseibacillus casei (strain BL23) (Lactobacillus casei).